A 654-amino-acid chain; its full sequence is Probable Xaa-Pro aminopeptidase P (654 aa).

Mn(2+)-binding residues include Asp451, Asp462, Glu560, and Glu574.

The protein belongs to the peptidase M24B family. Mn(2+) serves as cofactor.

It catalyses the reaction Release of any N-terminal amino acid, including proline, that is linked to proline, even from a dipeptide or tripeptide.. In terms of biological role, catalyzes the removal of a penultimate prolyl residue from the N-termini of peptides. The chain is Probable Xaa-Pro aminopeptidase P (ampp) from Botryotinia fuckeliana (strain B05.10) (Noble rot fungus).